We begin with the raw amino-acid sequence, 2145 residues long: Mediator of RNA polymerase II transcription subunit 12-like protein (2145 aa).

A disordered region spans residues Met1–Lys30. Thr462 carries the phosphothreonine modification. A compositionally biased stretch (basic and acidic residues) spans Glu1436–Lys1455. 3 disordered regions span residues Glu1436–Ser1460, Arg1721–Gln1802, and Asp2029–Phe2145. The span at Thr1768–Ser1777 shows a compositional bias: basic residues. Residues Arg2052–Gln2069 are compositionally biased toward low complexity. Residues Gln2070–Pro2079 show a composition bias toward pro residues. The segment covering Thr2089–Gln2099 has biased composition (polar residues). Over residues Arg2104–Gln2124 the composition is skewed to low complexity. Polar residues predominate over residues Lys2125–Val2136.

The protein belongs to the Mediator complex subunit 12 family. In terms of assembly, may be a component of the Mediator complex, which is known to be composed of MED1, MED4, MED6, MED7, MED8, MED9, MED10, MED11, MED12, MED13, MED13L, MED14, MED15, MED16, MED17, MED18, MED19, MED20, MED21, MED22, MED23, MED24, MED25, MED26, MED27, MED29, MED30, MED31, CCNC, CDK8 and CDC2L6/CDK11. The MED12, MED13, CCNC and CDK8 subunits form a distinct module termed the CDK8 module. Mediator containing the CDK8 module is less active than Mediator lacking this module in supporting transcriptional activation. Individual preparations of the Mediator complex lacking one or more distinct subunits have been variously termed ARC, CRSP, DRIP, PC2, SMCC and TRAP.

The protein localises to the nucleus. Its function is as follows. May be a component of the Mediator complex, a coactivator involved in the regulated transcription of nearly all RNA polymerase II-dependent genes. Mediator functions as a bridge to convey information from gene-specific regulatory proteins to the basal RNA polymerase II transcription machinery. Mediator is recruited to promoters by direct interactions with regulatory proteins and serves as a scaffold for the assembly of a functional preinitiation complex with RNA polymerase II and the general transcription factors. The sequence is that of Mediator of RNA polymerase II transcription subunit 12-like protein (MED12L) from Homo sapiens (Human).